Reading from the N-terminus, the 228-residue chain is Putative N-acetylmannosamine-6-phosphate 2-epimerase (228 aa).

It belongs to the NanE family.

The catalysed reaction is an N-acyl-D-glucosamine 6-phosphate = an N-acyl-D-mannosamine 6-phosphate. It participates in amino-sugar metabolism; N-acetylneuraminate degradation; D-fructose 6-phosphate from N-acetylneuraminate: step 3/5. Functionally, converts N-acetylmannosamine-6-phosphate (ManNAc-6-P) to N-acetylglucosamine-6-phosphate (GlcNAc-6-P). The polypeptide is Putative N-acetylmannosamine-6-phosphate 2-epimerase (Pasteurella multocida (strain Pm70)).